The sequence spans 414 residues: Histidine--tRNA ligase (414 aa).

It belongs to the class-II aminoacyl-tRNA synthetase family. Homodimer.

It is found in the cytoplasm. The catalysed reaction is tRNA(His) + L-histidine + ATP = L-histidyl-tRNA(His) + AMP + diphosphate + H(+). This Solibacter usitatus (strain Ellin6076) protein is Histidine--tRNA ligase.